Here is a 131-residue protein sequence, read N- to C-terminus: Transcriptional activator protein (131 aa).

Residues 13 to 28 carry the Nuclear localization signal motif; that stretch reads KAQHRIAKKRAVRRRR. Residues 33–52 fold into a zinc finger; sequence CGCSIYIHINCAKDGNGFTH. The tract at residues 78–131 is disordered; sequence DVQXGGSTLHAHKDIPHTNPVQPQPEESTKSSQSVPELPSLDGIDSSFWDDIFE. Residues 117-131 are transactivation; sequence SLDGIDSSFWDDIFE.

The protein belongs to the geminiviridae transcriptional activator protein family. As to quaternary structure, monomer. Homodimer. Homooligomer. Self-interaction correlates with nuclear localization and efficient activation of transcription. Monomers suppress local silencing by interacting with and inactivating host adenosine kinase 2 (ADK2) in the cytoplasm. Interacts with and inhibits host SNF1 kinase. Binds to ssDNA. Phosphorylated.

It is found in the host nucleus. The protein resides in the host cytoplasm. Functionally, strong activator of the late viral genes promoters. Enhances the expression of the capsid protein and nuclear shuttle protein. Acts as a suppressor of RNA-mediated gene silencing, also known as post-transcriptional gene silencing (PTGS), a mechanism of plant viral defense that limits the accumulation of viral RNAs. Suppresses the host RNA silencing by inhibiting adenosine kinase 2 (ADK2), a kinase involved in a general methylation pathway. Also suppresses the host basal defense by interacting with and inhibiting SNF1 kinase, a key regulator of cell metabolism implicated in innate antiviral defense. Determines pathogenicity. This Cucurbita moschata (Winter crookneck squash) protein is Transcriptional activator protein.